Here is a 74-residue protein sequence, read N- to C-terminus: Small ribosomal subunit protein eS28 (74 aa).

Belongs to the eukaryotic ribosomal protein eS28 family.

This Halorubrum lacusprofundi (strain ATCC 49239 / DSM 5036 / JCM 8891 / ACAM 34) protein is Small ribosomal subunit protein eS28.